Here is a 198-residue protein sequence, read N- to C-terminus: Phosphoheptose isomerase (198 aa).

The SIS domain maps to 40–198 (IIGALRGGHK…IEAALMQDAR (159 aa)). 55-57 (NGG) contributes to the substrate binding site. The Zn(2+) site is built by His-64 and Glu-68. Substrate-binding positions include Glu-68, 97-98 (ND), 123-125 (STS), Ser-128, and Gln-175. 2 residues coordinate Zn(2+): Gln-175 and His-183.

The protein belongs to the SIS family. GmhA subfamily. In terms of assembly, homotetramer. It depends on Zn(2+) as a cofactor.

It localises to the cytoplasm. It catalyses the reaction 2 D-sedoheptulose 7-phosphate = D-glycero-alpha-D-manno-heptose 7-phosphate + D-glycero-beta-D-manno-heptose 7-phosphate. It participates in carbohydrate biosynthesis; D-glycero-D-manno-heptose 7-phosphate biosynthesis; D-glycero-alpha-D-manno-heptose 7-phosphate and D-glycero-beta-D-manno-heptose 7-phosphate from sedoheptulose 7-phosphate: step 1/1. In terms of biological role, catalyzes the isomerization of sedoheptulose 7-phosphate in D-glycero-D-manno-heptose 7-phosphate. This Bradyrhizobium sp. (strain ORS 278) protein is Phosphoheptose isomerase.